We begin with the raw amino-acid sequence, 290 residues long: HTH-type transcriptional regulator BudR (290 aa).

The 58-residue stretch at 1–58 (MELRYLRYFVAVAEARNFTRAAHDLGISQPPLSQQIQRLEREIGTPLLRRLTRGVELT) folds into the HTH lysR-type domain. Positions 18-37 (FTRAAHDLGISQPPLSQQIQ) form a DNA-binding region, H-T-H motif.

Belongs to the LysR transcriptional regulatory family.

Regulator of the budABC operon for 2,3-butanediol synthesis. This Raoultella terrigena (Klebsiella terrigena) protein is HTH-type transcriptional regulator BudR (budR).